The sequence spans 432 residues: Patatin-like phospholipase domain-containing protein 5 (432 aa).

A PNPLA domain is found at 12 to 181; the sequence is LSFSGSGYMG…SNNLPFSDCP (170 aa). The short motif at 16 to 21 is the GXGXXG element; sequence GSGYMG. A GXSXG motif is present at residues 47-51; that stretch reads GSSSG. Ser49 serves as the catalytic Nucleophile. The active-site Proton acceptor is Asp168. A DGA/G motif is present at residues 168 to 170; that stretch reads DGA. The disordered stretch occupies residues 404 to 423; it reads ADSGLLRQQRGTAPSGNRPL.

The catalysed reaction is a triacylglycerol + H2O = a diacylglycerol + a fatty acid + H(+). Its function is as follows. Has abundant triacylglycerol lipase activity. The chain is Patatin-like phospholipase domain-containing protein 5 from Mus musculus (Mouse).